The following is a 327-amino-acid chain: S-adenosylmethionine/S-adenosylhomocysteine transporter (327 aa).

A run of 10 helical transmembrane segments spans residues 22–42, 53–73, 85–105, 114–134, 143–163, 165–185, 202–222, 240–260, 271–291, and 294–314; these read CDMA…SFAL, LFVT…LLLC, IMPI…LEFI, TACF…YVQL, LGGL…GGSE, VAEW…ATCL, SLSM…LSLI, LFLQ…YNLF, FLSF…WLLL, and SFPP…RLIY. The EamA 1 domain maps to 34–157; sequence FIWSSSFALS…LGLVSYLVYL (124 aa). Residues 189–313 enclose the EamA 2 domain; it reads GWTLLRKLGR…GFMVLGCRLI (125 aa).

This sequence belongs to the drug/metabolite transporter (DMT) superfamily. 10 TMS drug/metabolite exporter (DME) (TC 2.A.7.3) family.

Its subcellular location is the cell membrane. Functionally, transports S-adenosylmethionine (SAM) and S-adenosylhomocysteine (SAH). Allows bacteria to acquire SAM from the eukaryotic host cell and to likely remove the toxic by-product SAH. The protein is S-adenosylmethionine/S-adenosylhomocysteine transporter of Chlamydia trachomatis serovar D (strain ATCC VR-885 / DSM 19411 / UW-3/Cx).